A 251-amino-acid polypeptide reads, in one-letter code: Eukaryotic translation initiation factor 4E-3 (251 aa).

The tract at residues Asp-200–Pro-251 is disordered. The span at Ala-230–Pro-251 shows a compositional bias: polar residues.

It belongs to the eukaryotic initiation factor 4E family. As to quaternary structure, eIF4F is a multi-subunit complex, the composition of which varies with external and internal environmental conditions. It is composed of at least eIF4A, eIF4E and eIF4G. eIF4E is also known to interact with other partners. Interacts with mxt. Component of the pid-1 variant of the PETISCO complex (also called the pid-3, erh-2, tofu-6, and ife-3 small RNA complex) containing at least pid-1, tofu-6, ife-3, pid-3, and erh-2, which is required for the biogenesis of a class of 21 nucleotide PIWI-interacting RNAs (piRNAs) that possess a uracil residue at the 5'-end (also called 21U-RNAs). Component of the tost-1 variant of the PETISCO complex (also called the pid-3, erh-2, tofu-6, and ife-3 small RNA complex) containing at least tost-1, tofu-6, ife-3, pid-3, and erh-2, which plays an essential role in embryogenesis. Within the pid-1 and tost-1 variants of the PETISCO complexes interacts with tofu-6 (via C-terminus). In contrast to the pid-1 variant of the PETISCO complex, the tost-1 variant of the PETISCO complex plays a minor role in the biogenesis of 21U-RNAs. As to expression, highly expressed in the germline (at protein level).

It is found in the cytoplasmic granule. It localises to the cytoplasm. The protein localises to the perinuclear region. Its function is as follows. Recognizes and binds the 7-methylguanosine-containing mRNA cap during an early step in the initiation of protein synthesis and facilitates ribosome binding by inducing the unwinding of the mRNAs secondary structures. All 5 eIF4E proteins bind monomethyl cap structures. Only ife-1, ife-2 and ife-5 bind trimethyl cap structures which result from trans-splicing. Translation of trimethyl cap structure mRNAs may be regulated by intracellular redox state; disulfide bonds change the width and depth of the cap-binding cavity determining selectivity to mRNA caps. Ife-3 is essential for viability. Component of the pid-1 and tost-1 variants of the PETISCO complexes, which have roles in the biogenesis of a class of 21 nucleotide PIWI-interacting RNAs (piRNAs) that possess a uracil residue at the 5'-end (also called 21U-RNAs) and embryogenesis, respectively. Within the pid-1 variant of the PETISCO complex binds to capped 21U-RNA precursor molecules, possibly playing a role in the processing of the 5' end of the molecules to promote binding of other complex components such as pid-3. However, it is not essential for the biogenesis of 21U-RNAs by itself. Within the tost-1 variant of the PETISCO complex binds to splice leader SL1 RNA fragments to possibly play a role in their processing. This Caenorhabditis elegans protein is Eukaryotic translation initiation factor 4E-3.